Consider the following 541-residue polypeptide: Sialate O-acetylesterase (541 aa).

Residues 1-23 (MVSPGPVFGIVLLIIARVSRSAG) form the signal peptide. 8 N-linked (GlcNAc...) asparagine glycosylation sites follow: asparagine 107, asparagine 138, asparagine 188, asparagine 293, asparagine 356, asparagine 427, asparagine 448, and asparagine 462.

In terms of assembly, disulfide-linked heterodimer of a small subunit and a large subunit. Post-translationally, the two subunits are derived from a single precursor by proteolytic cleavage. The lysosomal isoform is glycosylated. Highly expressed in liver, testis, and kidney, whereas skeletal muscle, adipose tissue, and heart have lower levels. As to expression, highest expression in brain and ovary and lower levels in liver and thymus.

The protein localises to the lysosome. The protein resides in the cytoplasm. It carries out the reaction N-acetyl-9-O-acetylneuraminate + H2O = N-acetylneuraminate + acetate + H(+). It catalyses the reaction an Ac-O-9-sialoglycoconjugate + H2O = a sialoglycoconjugate + acetate + H(+). With respect to regulation, inhibited by diisopropyl fluorophosphate and diethyl-P-nitrophenyl phosphate. Functionally, catalyzes the removal of O-acetyl ester groups from position 9 of the free diacetylated sialate N-acetyl-9-O-acetylneuraminate (Neu5,9Ac2) in the cytosol and of the diacetylated sialate residues of sialylglycoconjugates in the lysosomes. Together with the sialate-O-acetyltransferase they regulate the balance of acetylated sialoglycoconjugates, key players in various processes such as cell-cell interactions, host-pathogen recognition, and tumor antigenicity. In Mus musculus (Mouse), this protein is Sialate O-acetylesterase (Siae).